We begin with the raw amino-acid sequence, 552 residues long: L-ascorbate oxidase (552 aa).

Plastocyanin-like domains follow at residues 1 to 122 (SQIR…LIVD) and 134 to 300 (DGEI…NYLP). 3 disulfides stabilise this stretch: Cys19/Cys201, Cys81/Cys538, and Cys180/Cys193. Residues His60 and His62 each coordinate Cu cation. Asn92 carries an N-linked (GlcNAc...) asparagine glycan. Positions 104 and 106 each coordinate Cu cation. 2 N-linked (GlcNAc...) asparagine glycosylation sites follow: Asn325 and Asn440. The region spanning 344–523 (NRRIFLLNTQ…HMGMGVVFAE (180 aa)) is the Plastocyanin-like 3 domain. 8 residues coordinate Cu cation: His445, His448, His450, His506, Cys507, His508, His512, and Met517.

It belongs to the multicopper oxidase family. Dimer. Cu cation serves as cofactor.

It is found in the secreted. The enzyme catalyses 4 L-ascorbate + O2 = 4 monodehydro-L-ascorbate radical + 2 H2O. Its function is as follows. May be involved in a redox system involving ascorbic acid. The protein is L-ascorbate oxidase of Cucurbita pepo var. melopepo (Zucchini).